The chain runs to 393 residues: Na(+)/H(+) antiporter NhaA (393 aa).

The next 11 helical transmembrane spans lie at 24 to 44 (GGLVLMAVALAAIVTANSPLA), 58 to 78 (LSLLHWINDALMALFFLLVGL), 96 to 116 (ILPGAAALGGMLFPALFYILF), 126 to 146 (GWAIPTATDIAFALGVISLFG), 155 to 175 (IFLAALAIIDDLGAVVIIALF), 178 to 198 (SDLNLLALAAAAAVLAALYGM), 214 to 234 (AVLWVLVFASGIHATLAGVLL), 267 to 287 (VAFIVVPIFGFANAGVSFSGV), 300 to 320 (VAAGLLLGKLVGVLSTVFLLV), 338 to 358 (GVAALCGIGFTMSLFIGLLAF), and 369 to 389 (MGILLGSLLSGLVGAAMLATF).

The protein belongs to the NhaA Na(+)/H(+) (TC 2.A.33) antiporter family.

Its subcellular location is the cell inner membrane. The catalysed reaction is Na(+)(in) + 2 H(+)(out) = Na(+)(out) + 2 H(+)(in). Functionally, na(+)/H(+) antiporter that extrudes sodium in exchange for external protons. The polypeptide is Na(+)/H(+) antiporter NhaA (Rhizobium etli (strain ATCC 51251 / DSM 11541 / JCM 21823 / NBRC 15573 / CFN 42)).